The sequence spans 87 residues: Small ribosomal subunit protein bS20 (87 aa).

A disordered region spans residues 1-20; it reads MANIKSQIKRNKTNEKARLR.

This sequence belongs to the bacterial ribosomal protein bS20 family.

In terms of biological role, binds directly to 16S ribosomal RNA. This is Small ribosomal subunit protein bS20 from Corynebacterium efficiens (strain DSM 44549 / YS-314 / AJ 12310 / JCM 11189 / NBRC 100395).